A 22-amino-acid polypeptide reads, in one-letter code: Caerin-3.3 (22 aa).

Lys22 carries the lysine amide modification.

Expressed by the skin parotoid and/or rostral glands.

Its subcellular location is the secreted. Functionally, antibacterial peptide, that adopts an alpha helical conformation which can disrupt bacterial membranes. Each caerin displays a different antimicrobial specificity. This Ranoidea caerulea (Green tree frog) protein is Caerin-3.3.